A 927-amino-acid polypeptide reads, in one-letter code: Probable UDP-N-acetylglucosamine--peptide N-acetylglucosaminyltransferase SPINDLY (927 aa).

Residues 1–31 (MGRPGMDSSEGRESNGVVPERNGGAVPAKQQ) are disordered. 11 TPR repeats span residues 34–67 (GKDTLRYANILRSRNKFAEALQLYNNVLEKDEAN), 68–101 (VEALIGKGICLQAQSLPMQAIECFNEAVRIDPGN), 102–135 (ACALTYCGMIYKDEGHLVEAAEAYQKARNADPSY), 143–176 (AIVLTDLGTSLKLAGNTEEGIQKYCEALEVDSHY), 177–210 (APAYYNLGVVYSEMMQFDLALTCYEKAALERPLY), 211–244 (AEAYCNMGVIYKNRGELEAAIACYERCLTISPNF), 252–285 (AIALTDLGTKVKIEGDINQGVAYYKKALFYNWHY), 286–319 (ADAMYNLGVAYGEMLNFEMAIVFYELALHFNPRC), 320–353 (AEACNNLGVIYKDRDNLDKAVECYQMALSIKPNF), 355–387 (QSLNNLGVVYTVQGKMDAASSMIQKAIFANSTY), and 388–421 (AEAYNNLGVLYRDAGSITSAVQAYEKCLQIDPDS). Residues 422–927 (RNAGQNRLLA…KVEANGHISR (506 aa)) are catalytic region.

This sequence belongs to the glycosyltransferase 41 family. O-GlcNAc transferase subfamily.

The protein resides in the nucleus. The enzyme catalyses L-seryl-[protein] + UDP-N-acetyl-alpha-D-glucosamine = 3-O-(N-acetyl-beta-D-glucosaminyl)-L-seryl-[protein] + UDP + H(+). The catalysed reaction is L-threonyl-[protein] + UDP-N-acetyl-alpha-D-glucosamine = 3-O-(N-acetyl-beta-D-glucosaminyl)-L-threonyl-[protein] + UDP + H(+). Its pathway is protein modification; protein glycosylation. Probable O-linked N-acetylglucosamine transferase (OGT) involved in various processes such as gibberellin (GA) signaling pathway. OGTs catalyze the addition of nucleotide-activated sugars directly onto the polypeptide through O-glycosidic linkage with the hydroxyl of serine or threonine. Probably acts by adding O-linked sugars to yet unknown proteins. The sequence is that of Probable UDP-N-acetylglucosamine--peptide N-acetylglucosaminyltransferase SPINDLY (SPY) from Oryza sativa subsp. japonica (Rice).